The sequence spans 359 residues: Phosphoserine aminotransferase (359 aa).

Arg-41 serves as a coordination point for L-glutamate. Residues 75–76 (AS), Trp-101, Thr-152, Asp-171, and Gln-194 contribute to the pyridoxal 5'-phosphate site. The residue at position 195 (Lys-195) is an N6-(pyridoxal phosphate)lysine. 236 to 237 (NT) is a binding site for pyridoxal 5'-phosphate.

The protein belongs to the class-V pyridoxal-phosphate-dependent aminotransferase family. SerC subfamily. As to quaternary structure, homodimer. Pyridoxal 5'-phosphate is required as a cofactor.

The protein localises to the cytoplasm. The catalysed reaction is O-phospho-L-serine + 2-oxoglutarate = 3-phosphooxypyruvate + L-glutamate. It carries out the reaction 4-(phosphooxy)-L-threonine + 2-oxoglutarate = (R)-3-hydroxy-2-oxo-4-phosphooxybutanoate + L-glutamate. It functions in the pathway amino-acid biosynthesis; L-serine biosynthesis; L-serine from 3-phospho-D-glycerate: step 2/3. The protein operates within cofactor biosynthesis; pyridoxine 5'-phosphate biosynthesis; pyridoxine 5'-phosphate from D-erythrose 4-phosphate: step 3/5. In terms of biological role, catalyzes the reversible conversion of 3-phosphohydroxypyruvate to phosphoserine and of 3-hydroxy-2-oxo-4-phosphonooxybutanoate to phosphohydroxythreonine. The sequence is that of Phosphoserine aminotransferase from Acinetobacter baumannii (strain AB307-0294).